A 237-amino-acid chain; its full sequence is N-(5'-phosphoribosyl)anthranilate isomerase (237 aa).

Belongs to the TrpF family.

It catalyses the reaction N-(5-phospho-beta-D-ribosyl)anthranilate = 1-(2-carboxyphenylamino)-1-deoxy-D-ribulose 5-phosphate. Its pathway is amino-acid biosynthesis; L-tryptophan biosynthesis; L-tryptophan from chorismate: step 3/5. The sequence is that of N-(5'-phosphoribosyl)anthranilate isomerase (TRP1) from Komagataella pastoris (Yeast).